The sequence spans 150 residues: Ribosome maturation factor RimP (150 aa).

The protein belongs to the RimP family.

It is found in the cytoplasm. In terms of biological role, required for maturation of 30S ribosomal subunits. The polypeptide is Ribosome maturation factor RimP (Thermotoga petrophila (strain ATCC BAA-488 / DSM 13995 / JCM 10881 / RKU-1)).